The following is a 409-amino-acid chain: uncharacterized protein (409 aa).

Transmembrane regions (helical) follow at residues 62-82 (FSLGIAAEAVLFIFALWWVWI), 100-120 (LLLFTLMFFGIVMAIALPEAF), 123-143 (MGLLFAVAYSAMQVSRSLFAL), 152-172 (ASFMTFFRITAWLTISSTFWI), 183-203 (VVLWIVALVVEYTGPTVRYWV), 252-272 (GTPWVLCFSFLTTVLMWWIYF), 293-313 (AQYLFTYGHLPIVGGIIFTAV), 328-348 (YNFALAQLGGPILFLAGTMWM), 355-375 (VLPYSHVFGISLLTASFTLVP), and 376-396 (FVANFAIQALTGVILLVVAVW).

The protein resides in the cell membrane. This is an uncharacterized protein from Rhizobium meliloti (strain 1021) (Ensifer meliloti).